Reading from the N-terminus, the 628-residue chain is MAELGELKHMVMSFRVSELQVLLGFAGRNKSGRKHELLAKALHLLKSSCAPSVQMKIKELYRRRFPRKTLGPSDLSLLSLPPGTSPVGSPGPLAPIPPTLLAPGTLLGPKREVDMHPPLPQPVHPDVTMKPLPFYEVYGELIRPTTLASTSSQRFEEAHFTFALTPQQVQQILTSREVLPGAKCDYTIQVQLRFCLCETSCPQEDYFPPNLFVKVNGKLCPLPGYLPPTKNGAEPKRPSRPINITPLARLSATVPNTIVVNWSSEFGRNYSLSVYLVRQLTAGTLLQKLRAKGIRNPDHSRALIKEKLTADPDSEVATTSLRVSLMCPLGKMRLTVPCRALTCAHLQSFDAALYLQMNEKKPTWTCPVCDKKAPYESLIIDGLFMEILSSCSDCDEIQFMEDGSWCPMKPKKEASEVCPPPGYGLDGLQYSPVQGGDPSENKKKVEVIDLTIESSSDEEDLPPTKKHCSVTSAAIPALPGSKGVLTSGHQPSSVLRSPAMGTLGGDFLSSLPLHEYPPAFPLGADIQGLDLFSFLQTESQHYGPSVITSLDEQDALGHFFQYRGTPSHFLGPLAPTLGSSHCSATPAPPPGRVSSIVAPGGALREGHGGPLPSGPSLTGCRSDIISLD.

The segment at 1–200 (MAELGELKHM…QLRFCLCETS (200 aa)) is interaction with CCAR2. The region spanning 11–45 (VMSFRVSELQVLLGFAGRNKSGRKHELLAKALHLL) is the SAP domain. An LXXLL motif motif is present at residues 19–23 (LQVLL). Residues lysine 46, lysine 56, lysine 230, and lysine 307 each participate in a glycyl lysine isopeptide (Lys-Gly) (interchain with G-Cter in SUMO2) cross-link. A PINIT domain is found at 115 to 280 (MHPPLPQPVH…SLSVYLVRQL (166 aa)). The SP-RING-type zinc-finger motif lies at 312 to 393 (PDSEVATTSL…FMEILSSCSD (82 aa)). Zn(2+) contacts are provided by cysteine 343, histidine 345, cysteine 366, and cysteine 369. Residues 450-460 (LTIESSSDEED) are SUMO1-binding. Residues lysine 466 and lysine 482 each participate in a glycyl lysine isopeptide (Lys-Gly) (interchain with G-Cter in SUMO2) cross-link. The interval 597–617 (VAPGGALREGHGGPLPSGPSL) is disordered.

The protein belongs to the PIAS family. As to quaternary structure, monomer. Binds SUMO1 and UBE2I. Interacts with BCL11A, HMGA2, IRF1, MITF and NCOA2. Interacts with STAT5; the interaction occurs on stimulation by PRL. Interacts with GFI1; the interaction relieves the inhibitory effect of PIAS3 on STAT3-mediated transcriptional activity. Interacts with AR, PLAG1 and ZFHX3. Interacts with STAT3; the interaction occurs on stimulation by IL6, CNTF or OSM and inhibits the DNA binding activity of STAT3. Interacts with MTA1. Interacts with CCAR2 (via N-terminus). Interacts with TRIM8. Interacts with PRDM1/Blimp-1. Post-translationally, sumoylated. Widely expressed.

It is found in the cytoplasm. It localises to the nucleus. The protein resides in the nucleus speckle. It functions in the pathway protein modification; protein sumoylation. Functionally, functions as an E3-type small ubiquitin-like modifier (SUMO) ligase, stabilizing the interaction between UBE2I and the substrate, and as a SUMO-tethering factor. Plays a crucial role as a transcriptional coregulation in various cellular pathways, including the STAT pathway and the steroid hormone signaling pathway. Involved in regulating STAT3 signaling via inhibiting STAT3 DNA-binding and suppressing cell growth. Enhances the sumoylation of MTA1 and may participate in its paralog-selective sumoylation. Sumoylates CCAR2 which promotes its interaction with SIRT1. Diminishes the sumoylation of ZFHX3 by preventing the colocalization of ZFHX3 with SUMO1 in the nucleus. This chain is E3 SUMO-protein ligase PIAS3 (PIAS3), found in Homo sapiens (Human).